Reading from the N-terminus, the 501-residue chain is Probable cytosol aminopeptidase (501 aa).

Positions 272 and 277 each coordinate Mn(2+). Lys284 is a catalytic residue. Mn(2+)-binding residues include Asp295, Asp354, and Glu356. The active site involves Arg358.

The protein belongs to the peptidase M17 family. The cofactor is Mn(2+).

Its subcellular location is the cytoplasm. It catalyses the reaction Release of an N-terminal amino acid, Xaa-|-Yaa-, in which Xaa is preferably Leu, but may be other amino acids including Pro although not Arg or Lys, and Yaa may be Pro. Amino acid amides and methyl esters are also readily hydrolyzed, but rates on arylamides are exceedingly low.. The enzyme catalyses Release of an N-terminal amino acid, preferentially leucine, but not glutamic or aspartic acids.. In terms of biological role, presumably involved in the processing and regular turnover of intracellular proteins. Catalyzes the removal of unsubstituted N-terminal amino acids from various peptides. The sequence is that of Probable cytosol aminopeptidase from Buchnera aphidicola subsp. Baizongia pistaciae (strain Bp).